Consider the following 224-residue polypeptide: tRNA (guanine-N(7)-)-methyltransferase (224 aa).

Glu57, Asp82, and Asp109 together coordinate S-adenosyl-L-methionine. Substrate is bound at residue Asp167.

This sequence belongs to the class I-like SAM-binding methyltransferase superfamily. TrmB family.

The enzyme catalyses guanosine(46) in tRNA + S-adenosyl-L-methionine = N(7)-methylguanosine(46) in tRNA + S-adenosyl-L-homocysteine. Its pathway is tRNA modification; N(7)-methylguanine-tRNA biosynthesis. Its function is as follows. Catalyzes the formation of N(7)-methylguanine at position 46 (m7G46) in tRNA. The polypeptide is tRNA (guanine-N(7)-)-methyltransferase (Chloroflexus aurantiacus (strain ATCC 29366 / DSM 635 / J-10-fl)).